A 156-amino-acid polypeptide reads, in one-letter code: Small ribosomal subunit protein uS7 (156 aa).

The protein belongs to the universal ribosomal protein uS7 family. Part of the 30S ribosomal subunit. Contacts proteins S9 and S11.

One of the primary rRNA binding proteins, it binds directly to 16S rRNA where it nucleates assembly of the head domain of the 30S subunit. Is located at the subunit interface close to the decoding center, probably blocks exit of the E-site tRNA. The chain is Small ribosomal subunit protein uS7 from Salmonella agona (strain SL483).